The following is a 638-amino-acid chain: CTTNBP2 N-terminal-like protein (638 aa).

A coiled-coil region spans residues 87–284; it reads MKQCKNMQER…KDLEAAQQHR (198 aa). Disordered stretches follow at residues 280–303, 360–430, 463–490, and 514–621; these read AQQH…TATE, RELT…PCSS, RHKF…LSPT, and NQGP…CSPS. At Ser285 the chain carries Phosphoserine. The span at 360–371 shows a compositional bias: polar residues; it reads RELTSDSSTENQ. 2 stretches are compositionally biased toward low complexity: residues 401–430 and 467–477; these read TMPS…PCSS and QSQADQDQQAS. Phosphoserine is present on residues Ser481, Ser488, Ser522, Ser526, Ser559, Ser562, and Ser567. Polar residues predominate over residues 514–528; sequence NQGPIKPVSPNSSPF. Thr569 and Thr589 each carry phosphothreonine. Residues 589 to 620 show a composition bias toward polar residues; sequence TPSQSATTPVTKTHSQASSLAATEDLASSCSP. Ser591 carries the phosphoserine modification.

In terms of assembly, interacts with CTTN/cortactin; this interaction may redistribute CTTN to stress fibers. May form homomers. Associates with the core of STRIPAK complexes composed of PP2A catalytic and scaffolding subunits, the striatins (PP2A regulatory subunits), the striatin-associated proteins MOB4, STRIP1 and STRIP2, PDCD10 and members of the STE20 kinases, such as STK24 and STK26. Predominantly expressed in skin, also detectable in spleen and lung (at protein level). Very low levels, if any, in brain (at protein level).

Its subcellular location is the cell projection. The protein localises to the lamellipodium. It is found in the cytoplasm. The protein resides in the cytoskeleton. It localises to the stress fiber. Its function is as follows. Regulates lamellipodial actin dynamics in a CTTN-dependent manner. Associates with core striatin-interacting phosphatase and kinase (STRIPAK) complex to form CTTNBP2NL-STRIPAK complexes. STRIPAK complexes have critical roles in protein (de)phosphorylation and are regulators of multiple signaling pathways including Hippo, MAPK, nuclear receptor and cytoskeleton remodeling. Different types of STRIPAK complexes are involved in a variety of biological processes such as cell growth, differentiation, apoptosis, metabolism and immune regulation. The protein is CTTNBP2 N-terminal-like protein (Cttnbp2nl) of Mus musculus (Mouse).